The chain runs to 285 residues: Probable endonuclease 4 (285 aa).

Zn(2+) is bound by residues His69, His109, Glu145, Asp179, His182, His216, Asp229, His231, and Glu261.

The protein belongs to the AP endonuclease 2 family. Zn(2+) is required as a cofactor.

The enzyme catalyses Endonucleolytic cleavage to 5'-phosphooligonucleotide end-products.. Endonuclease IV plays a role in DNA repair. It cleaves phosphodiester bonds at apurinic or apyrimidinic (AP) sites, generating a 3'-hydroxyl group and a 5'-terminal sugar phosphate. In Shigella flexneri serotype 5b (strain 8401), this protein is Probable endonuclease 4.